A 502-amino-acid chain; its full sequence is MMAFLEFSNISKGYPGVQALANVSFTVEKGAVHGLMGENGAGKSTLIRVLSGDQAADAGNILIDGEEQKYGSVRDAFHAGVIVIHQELQLVPELTVAENLWLGRFPAKGGVIHSKTLIETVRSKLEEIGIDIDPSAKVASLSIGARQMVEIAKAVMLDARVIALDEPTSSLSSRESEILFSLIDRLKAKGTVILYVSHRLDEIFRLCDSLTVLRDGKLAAHHPQIAETTREQIISEMVGREISNVWGWRERPLGGIRLEVNGLSGPRLRHPISFSVRQGEILGFFGLIGAGRSEMARLLYGADARHQGQVTIDGVAVSPNNPKAAINAGMVLCPEDRKFDGIVQGRSIEENIAISSRRHFSPFGILSPRQEAALADRFIAKLRVRTPSRKQDIINLSGGNQQKVILGRWLSEQGIKVLVIDEPTRGIDVGAKSEIYEILYELAAGGMAIVVISSELPEVMGISDRIMVMCQGRVAANVARPDFDERSILTAALPDKNAAGTL.

ABC transporter domains follow at residues 5-240 (LEFS…MVGR) and 253-496 (LGGI…LPDK). 37 to 44 (GENGAGKS) contacts ATP.

It belongs to the ABC transporter superfamily. Arabinose importer (TC 3.A.1.2.2) family. The complex is composed of two ATP-binding proteins (AraG), two transmembrane proteins (AraH) and a solute-binding protein (AraF).

The protein resides in the cell inner membrane. It carries out the reaction L-arabinose(out) + ATP + H2O = L-arabinose(in) + ADP + phosphate + H(+). Functionally, part of the ABC transporter complex AraFGH involved in arabinose import. Responsible for energy coupling to the transport system. The chain is Arabinose import ATP-binding protein AraG from Rhizobium johnstonii (strain DSM 114642 / LMG 32736 / 3841) (Rhizobium leguminosarum bv. viciae).